A 224-amino-acid polypeptide reads, in one-letter code: Peptidyl-prolyl cis-trans isomerase FKBP3 (224 aa).

At alanine 2 the chain carries N-acetylalanine. Serine 36 bears the Phosphoserine mark. The segment covering 89–102 (KLNEDKPKETKSEE) has biased composition (basic and acidic residues). A disordered region spans residues 89–111 (KLNEDKPKETKSEETLDEGPPKY). Lysine 99 is modified (N6-acetyllysine). The region spanning 128 to 224 (GDVVHCWYTG…TFEVELVDID (97 aa)) is the PPIase FKBP-type domain. Residue serine 152 is modified to Phosphoserine. Lysine 170 bears the N6-acetyllysine mark.

It belongs to the FKBP-type PPIase family.

The protein localises to the nucleus. It carries out the reaction [protein]-peptidylproline (omega=180) = [protein]-peptidylproline (omega=0). With respect to regulation, inhibited preferentially by rapamycin over FK506. In terms of biological role, FK506- and rapamycin-binding proteins (FKBPs) constitute a family of receptors for the two immunosuppressants which inhibit T-cell proliferation by arresting two distinct cytoplasmic signal transmission pathways. PPIases accelerate the folding of proteins. The sequence is that of Peptidyl-prolyl cis-trans isomerase FKBP3 (FKBP3) from Homo sapiens (Human).